The sequence spans 712 residues: Probable GTP diphosphokinase RSH3, chloroplastic (712 aa).

The N-terminal 64 residues, 1–64, are a transit peptide targeting the chloroplast; the sequence is MVVATTIALY…LLFSGASVKS (64 aa). Low complexity predominate over residues 65–74; it reads SSSSSSSHPS. Residues 65–84 form a disordered region; it reads SSSSSSSHPSVGEELASIRH. The HD domain maps to 237–338; it reads YLQHCVETAM…IKLADRLHNM (102 aa).

Belongs to the RelA/SpoT family.

Its subcellular location is the plastid. It localises to the chloroplast. The enzyme catalyses GTP + ATP = guanosine 3'-diphosphate 5'-triphosphate + AMP. Probable ppGpp (guanosine 3'-diphosphate 5'-diphosphate) synthetase that may be involved in a rapid plant ppGpp-mediated response to pathogens and other stresses. The polypeptide is Probable GTP diphosphokinase RSH3, chloroplastic (RSH3) (Arabidopsis thaliana (Mouse-ear cress)).